The primary structure comprises 446 residues: N-succinylarginine dihydrolase (446 aa).

Substrate contacts are provided by residues 19-28 (AGLSFGNVAS), Asn110, and 137-138 (HR). Glu174 is a catalytic residue. Residue Arg213 coordinates substrate. His249 is a catalytic residue. Residues Asp251 and Asn364 each contribute to the substrate site. The Nucleophile role is filled by Cys370.

It belongs to the succinylarginine dihydrolase family. Homodimer.

It catalyses the reaction N(2)-succinyl-L-arginine + 2 H2O + 2 H(+) = N(2)-succinyl-L-ornithine + 2 NH4(+) + CO2. Its pathway is amino-acid degradation; L-arginine degradation via AST pathway; L-glutamate and succinate from L-arginine: step 2/5. In terms of biological role, catalyzes the hydrolysis of N(2)-succinylarginine into N(2)-succinylornithine, ammonia and CO(2). This Burkholderia cenocepacia (strain ATCC BAA-245 / DSM 16553 / LMG 16656 / NCTC 13227 / J2315 / CF5610) (Burkholderia cepacia (strain J2315)) protein is N-succinylarginine dihydrolase.